Here is a 460-residue protein sequence, read N- to C-terminus: Zinc transporter 6 (460 aa).

At 1–33 (MGTIHLFRKSQRSLVGKLTHEFRLVAADRRSWK) the chain is on the cytoplasmic side. A helical transmembrane segment spans residues 34-54 (ILLFGAINLICIGFLLMWCSS). The Extracellular segment spans residues 55 to 64 (TNSIALTAYT). The helical transmembrane segment at 65–85 (YLTIFDLFSLITCLISYWVMV) threads the bilayer. At 86–98 (KKPSPVYSFGFER) the chain is on the cytoplasmic side. The chain crosses the membrane as a helical span at residues 99–119 (FEVLAVFASTVLAQLGALFIL). Topologically, residues 120–134 (KESAERFLEQPEIHT) are extracellular. A helical membrane pass occupies residues 135–155 (GRLLVGTFVALFFNLFTMLSV). At 156–200 (RNKPFAYVSEAASTSWLQEHVADLSRSICGIIPGLSSIFLPRMNP) the chain is on the cytoplasmic side. Residues 201–221 (FVLIDIAGALALCITYMLIEI) traverse the membrane as a helical segment. Residues 222–228 (NNYYAVD) are Extracellular-facing. The helical transmembrane segment at 229 to 249 (TASAIAIALMTFGTMYPMSVY) threads the bilayer. The Cytoplasmic portion of the chain corresponds to 250–460 (SGKVLLQTTP…GTNTRGQSRP (211 aa)). Residues 372 to 392 (PVTSTPAKPSSPPPEFSFNTP) form a disordered region.

It belongs to the cation diffusion facilitator (CDF) transporter (TC 2.A.4) family. SLC30A subfamily. Heterodimer with SLC30A5; form a functional zinc ion transmembrane transporter.

The protein localises to the golgi apparatus. It localises to the trans-Golgi network membrane. Its function is as follows. Has probably no intrinsic transporter activity but together with SLC30A5 forms a functional zinc ion:proton antiporter heterodimer, mediating zinc entry into the lumen of organelles along the secretory pathway. As part of that zinc ion:proton antiporter, contributes to zinc ion homeostasis within the early secretory pathway and regulates the activation and folding of enzymes like alkaline phosphatases and enzymes involved in phosphatidylinositol glycan anchor biosynthesis. The polypeptide is Zinc transporter 6 (SLC30A6) (Gallus gallus (Chicken)).